We begin with the raw amino-acid sequence, 156 residues long: MNINATILGQAIAFILFVAFCMKYVWPPLMAAIEKRQKEVADGLASAERAKKDLDLAQASATDQLKKAKDDAQVIIEQANKRRAQILDDAKAEAEQERNKIVTQAQAEIDAERKRAREELRKQVAMLAVAGAEKIIERSVDEAANSDIVDKLVAEL.

A helical transmembrane segment spans residues 11 to 31 (AIAFILFVAFCMKYVWPPLMA).

Belongs to the ATPase B chain family. As to quaternary structure, F-type ATPases have 2 components, F(1) - the catalytic core - and F(0) - the membrane proton channel. F(1) has five subunits: alpha(3), beta(3), gamma(1), delta(1), epsilon(1). F(0) has three main subunits: a(1), b(2) and c(10-14). The alpha and beta chains form an alternating ring which encloses part of the gamma chain. F(1) is attached to F(0) by a central stalk formed by the gamma and epsilon chains, while a peripheral stalk is formed by the delta and b chains.

It localises to the cell inner membrane. In terms of biological role, f(1)F(0) ATP synthase produces ATP from ADP in the presence of a proton or sodium gradient. F-type ATPases consist of two structural domains, F(1) containing the extramembraneous catalytic core and F(0) containing the membrane proton channel, linked together by a central stalk and a peripheral stalk. During catalysis, ATP synthesis in the catalytic domain of F(1) is coupled via a rotary mechanism of the central stalk subunits to proton translocation. Functionally, component of the F(0) channel, it forms part of the peripheral stalk, linking F(1) to F(0). This chain is ATP synthase subunit b, found in Erwinia tasmaniensis (strain DSM 17950 / CFBP 7177 / CIP 109463 / NCPPB 4357 / Et1/99).